The following is a 441-amino-acid chain: Transcription factor bHLH90 (441 aa).

One can recognise a bHLH domain in the interval 260-309; the sequence is NFKSKNLHSERKRRERINQAMYGLRAVVPKITKLNKIGIFSDAVDYINEL.

As to quaternary structure, homodimer. As to expression, expressed constitutively in roots, leaves, stems, and flowers.

It is found in the nucleus. This chain is Transcription factor bHLH90 (BHLH90), found in Arabidopsis thaliana (Mouse-ear cress).